A 389-amino-acid polypeptide reads, in one-letter code: Chalcone synthase 4 (389 aa).

The active site involves cysteine 164.

This sequence belongs to the thiolase-like superfamily. Chalcone/stilbene synthases family.

It carries out the reaction (E)-4-coumaroyl-CoA + 3 malonyl-CoA + 3 H(+) = 2',4,4',6'-tetrahydroxychalcone + 3 CO2 + 4 CoA. Its pathway is secondary metabolite biosynthesis; flavonoid biosynthesis. Its function is as follows. The primary product of this enzyme is 4,2',4',6'-tetrahydroxychalcone (also termed naringenin-chalcone or chalcone) which can under specific conditions spontaneously isomerize into naringenin. The polypeptide is Chalcone synthase 4 (CHS4) (Medicago sativa (Alfalfa)).